Consider the following 122-residue polypeptide: Large ribosomal subunit protein bL12 (122 aa).

This sequence belongs to the bacterial ribosomal protein bL12 family. In terms of assembly, homodimer. Part of the ribosomal stalk of the 50S ribosomal subunit. Forms a multimeric L10(L12)X complex, where L10 forms an elongated spine to which 2 to 4 L12 dimers bind in a sequential fashion. Binds GTP-bound translation factors.

Forms part of the ribosomal stalk which helps the ribosome interact with GTP-bound translation factors. Is thus essential for accurate translation. In Sulfurimonas denitrificans (strain ATCC 33889 / DSM 1251) (Thiomicrospira denitrificans (strain ATCC 33889 / DSM 1251)), this protein is Large ribosomal subunit protein bL12.